A 708-amino-acid chain; its full sequence is Quinohemoprotein alcohol dehydrogenase (708 aa).

The first 31 residues, 1-31 (MERLIDNSHGWPGRMVWLLAACLGSAAAFAQ), serve as a signal peptide directing secretion. A pyrroloquinoline quinone-binding site is contributed by Glu-101. Cys-147 and Cys-148 form a disulfide bridge. Pyrroloquinoline quinone is bound by residues Arg-153, Thr-198, and 214–215 (GA). Position 216 (Glu-216) interacts with Ca(2+). Thr-274 is a pyrroloquinoline quinone binding site. Ca(2+) is bound by residues Asn-294 and Asp-339. The active-site Proton acceptor is the Asp-339. Pyrroloquinoline quinone-binding positions include Lys-366, 425 to 426 (NW), and Val-575. A Cytochrome c domain is found at 619 to 708 (YDPAKVEAGT…GTADAIRPKP (90 aa)). Positions 635, 638, 639, and 678 each coordinate heme c.

The protein belongs to the bacterial PQQ dehydrogenase family. As to quaternary structure, monomer. Requires pyrroloquinoline quinone as cofactor. It depends on Ca(2+) as a cofactor. Heme c serves as cofactor. Post-translationally, in the crystallographic structures Trp-543 is oxidized to 2'-hydroxytryptophan.

The protein localises to the periplasm. It carries out the reaction 2 oxidized [azurin] + a primary alcohol = 2 reduced [azurin] + an aldehyde + 2 H(+). Its function is as follows. Catalyzes the dye-linked oxidation of primary alcohols to the corresponding aldehydes and the (subsequent) oxidation of the aldehydes to carboxylic acids. Methanol is not a substrate. This is Quinohemoprotein alcohol dehydrogenase from Comamonas testosteroni (Pseudomonas testosteroni).